We begin with the raw amino-acid sequence, 224 residues long: Transposase for insertion sequence-like element IS431mec (224 aa).

Residues glutamate 33–glutamine 52 constitute a DNA-binding region (H-T-H motif). An Integrase catalytic domain is found at tryptophan 73–leucine 222.

Involved in the transposition of the insertion sequence. The sequence is that of Transposase for insertion sequence-like element IS431mec (tnp) from Staphylococcus aureus (strain NCTC 8325 / PS 47).